Consider the following 143-residue polypeptide: Peptide methionine sulfoxide reductase MsrB (143 aa).

Residues 16–139 (DAELRRRLTP…NSAALNFESR (124 aa)) form the MsrB domain. Zn(2+)-binding residues include Cys55, Cys58, Cys104, and Cys107. The active-site Nucleophile is the Cys128.

It belongs to the MsrB Met sulfoxide reductase family. Requires Zn(2+) as cofactor.

The enzyme catalyses L-methionyl-[protein] + [thioredoxin]-disulfide + H2O = L-methionyl-(R)-S-oxide-[protein] + [thioredoxin]-dithiol. The sequence is that of Peptide methionine sulfoxide reductase MsrB from Burkholderia orbicola (strain MC0-3).